A 574-amino-acid chain; its full sequence is Developmental and secondary metabolism regulator veA (574 aa).

4 disordered regions span residues 1 to 22 (MATR…SRIT), 39 to 60 (ERAR…VDPP), 255 to 500 (RSSD…GAGK), and 513 to 548 (RSYE…GRNF). The 206-residue stretch at 25–230 (GKKLTYKLNV…AEQGCRVRIR (206 aa)) folds into the Velvet domain. Positions 39–44 (ERARAC) match the Nuclear localization signal motif. 2 stretches are compositionally biased toward pro residues: residues 314–323 (RPMPPAPVPA) and 330–341 (PAPPAPPAPPSH). Composition is skewed to polar residues over residues 343–359 (PGYQ…TQYP), 385–394 (HARNPSTSAE), 402–415 (YPSS…SSYP), and 448–458 (VAQSAGPRSQT). The tract at residues 457–501 (QTPSSSLVPSLPPLKALSGDYPNNLSQPSSSISQSPSHDLGAGKK) is PEST. 2 stretches are compositionally biased toward low complexity: residues 459-474 (PSSS…KALS) and 482-493 (SQPSSSISQSPS). 2 stretches are compositionally biased toward basic and acidic residues: residues 513-525 (RSYE…DDRP) and 532-543 (PDTESHPRRLSD).

This sequence belongs to the velvet family. VeA subfamily. In terms of assembly, component of the heterotrimeric velvet complex composed of laeA, veA and velB; VeA acting as a bridging protein between laeA and velB.

The protein resides in the nucleus. It is found in the cytoplasm. In terms of biological role, component of the velvet transcription factor complex that controls sexual/asexual developmental ratio in response to light, promoting sexual development in the darkness while stimulating asexual sporulation under illumination. The velvet complex hat acts as a global regulator for secondary metabolite gene expression. Controls the expression of the aflatoxin gene cluster. Required for the expression of aflR and aflJ. Mediates the coordination of aflatoxigenic vesicles (aflatoxisomes) development with aflatoxin gene expression. Regulates branched chain amino acid and ethanol metabolism and acts as a positive regulator of mitochondrial and peroxisomal beta-oxidation. This is Developmental and secondary metabolism regulator veA from Aspergillus parasiticus.